Here is a 595-residue protein sequence, read N- to C-terminus: Probable xyloglucan glycosyltransferase 9 (595 aa).

The next 2 helical transmembrane spans lie at 30 to 50 (AFVV…INGW) and 77 to 97 (ATYV…LFLI). The active site involves aspartate 177. Positions 236 and 238 each coordinate substrate. Residue aspartate 330 is part of the active site. 4 helical membrane-spanning segments follow: residues 408–428 (LILP…TMFV), 433–453 (LPDW…ILPS), 545–564 (IYKK…ARSL), and 570–590 (IHFY…LDLI).

This sequence belongs to the glycosyltransferase 2 family. Plant cellulose synthase-like C subfamily.

It localises to the golgi apparatus membrane. Functionally, probable beta-1,4-glucan synthase rather involved in the synthesis of the xyloglucan backbone than cellulose. Seems to work simultaneously with xyloglucan 6-xylosyltransferase. Xyloglucan is a noncellulosic polysaccharides of plant cell wall and consists of a glucan backbone substituted by xylose, galactose and fucose. In Oryza sativa subsp. japonica (Rice), this protein is Probable xyloglucan glycosyltransferase 9 (CSLC9).